The following is a 152-amino-acid chain: MSDAATRRLMKELAQLKSEAPEGLLVDNTSTSNDLKQWKIGVVGAEGTLYAGEVFMLQFTFGPQYPFNSPEVMFVGETIPAHPHIYSNGHICLSILSDDWTPALSVQSVCLSILSMLSSSKEKKHPIDDAIYVRTCSKNPSKTRWWFHDDSV.

A Peptide (Met-Gly) (interchain with G-Cter in ubiquitin) cross-link involves residue Met-1. The region spanning 4 to 152 is the UBC core domain; sequence AATRRLMKEL…TRWWFHDDSV (149 aa). Residue Cys-92 is the Glycyl thioester intermediate of the active site.

This sequence belongs to the ubiquitin-conjugating enzyme family.

It catalyses the reaction S-ubiquitinyl-[E1 ubiquitin-activating enzyme]-L-cysteine + [E2 ubiquitin-conjugating enzyme]-L-cysteine = [E1 ubiquitin-activating enzyme]-L-cysteine + S-ubiquitinyl-[E2 ubiquitin-conjugating enzyme]-L-cysteine.. The enzyme catalyses S-ubiquitinyl-[E1 ubiquitin-activating enzyme]-L-cysteine + [acceptor protein]-N-terminal-amino acid = [E1 ubiquitin-activating enzyme]-L-cysteine + N-terminal-ubiquitinyl-[acceptor protein].. It functions in the pathway protein modification; protein ubiquitination. Accepts ubiquitin from the E1 complex and catalyzes its covalent attachment to other proteins. Together with ubc-18, required for the ubiquitination of membranous organelles, and the removal of paternal mitochondria from early embryos. The polypeptide is Ubiquitin-conjugating enzyme E2 W (Caenorhabditis elegans).